The following is a 167-amino-acid chain: Mitochondrial fission 1 protein B (167 aa).

One copy of the TPR repeat lies at 92–125; that stretch reads REKLYLLALGYYRSGDFSRSRDCIERCLEVEPES. The chain crosses the membrane as a helical span at residues 144–164; it reads VIGVGIAVTAVGVVAGIAAAI.

This sequence belongs to the FIS1 family. As to quaternary structure, interacts with PEX11A, PEX11B, PEX11C, PEX11D and PEX11E.

The protein localises to the mitochondrion outer membrane. The protein resides in the peroxisome membrane. Component of the peroxisomal and mitochondrial division machineries. Plays a role in promoting the fission of mitochondria and peroxisomes. In association with PEX11C, PEX11D, PEX11E and DRP3A, is involved in cell cycle-associated constitutive self-replication of preexisting peroxisomes. The chain is Mitochondrial fission 1 protein B (FIS1B) from Arabidopsis thaliana (Mouse-ear cress).